Here is a 157-residue protein sequence, read N- to C-terminus: Nicotinate dehydrogenase subunit A (157 aa).

The 2Fe-2S ferredoxin-type domain maps to 3–79 (TTISLQVNGQ…GRNITTLEGL (77 aa)). [2Fe-2S] cluster contacts are provided by Cys-41, Cys-46, Cys-49, and Cys-61.

Requires [2Fe-2S] cluster as cofactor.

It catalyses the reaction 2 Fe(III)-[cytochrome] + nicotinate + H2O = 2 Fe(II)-[cytochrome] + 6-hydroxynicotinate + 2 H(+). It functions in the pathway cofactor degradation; nicotinate degradation. In terms of biological role, subunit of the two-component enzyme NicAB that mediates nicotinate hydroxylation, the first step in the aerobic nicotinate degradation pathway. Mediates conversion of nicotinate into 6-hydroxynicotinate (6HNA). The chain is Nicotinate dehydrogenase subunit A (nicA) from Pseudomonas putida (strain ATCC 47054 / DSM 6125 / CFBP 8728 / NCIMB 11950 / KT2440).